The chain runs to 148 residues: Snaclec convulxin subunit beta (148 aa).

An N-terminal signal peptide occupies residues 1-23 (MGRFIFVSFGLLVVFLSLSGSEA). 3 disulfide bridges follow: Cys-27-Cys-38, Cys-55-Cys-144, and Cys-121-Cys-136. The C-type lectin domain occupies 34–148 (YDRYCYKVFK…TYSFVCKFEA (115 aa)).

It belongs to the snaclec family. As to quaternary structure, tetramer of heterodimers of alpha and beta subunits (alphabeta)(4); disulfide-linked. As to expression, expressed by the venom gland.

The protein resides in the secreted. In terms of biological role, snake venom lectin that activates platelets by binding to the platelet collagen receptor glycoprotein VI (GP6). The indirect activation of integrin alpha-IIb/beta-3 (ITGA2B/ITGB3) also induced by the toxin is upstream the cytoskeletal translocation of GPIb, FcRgamma (FCER1G) and 14-3-3zeta (YWHAZ). This chain is Snaclec convulxin subunit beta, found in Crotalus durissus terrificus (South American rattlesnake).